A 357-amino-acid chain; its full sequence is UPF0283 membrane protein BMEA_A1074 (357 aa).

Positions 1–36 are disordered; it reads MSDKTPRKPTAFRLEQPARVSAASEQEEPRRPRAVK. The segment covering 27 to 36 has biased composition (basic and acidic residues); that stretch reads EEPRRPRAVK. The next 2 membrane-spanning stretches (helical) occupy residues 78 to 98 and 109 to 129; these read ILFG…TEDL and LGWT…AIIL.

Belongs to the UPF0283 family.

It is found in the cell inner membrane. This is UPF0283 membrane protein BMEA_A1074 from Brucella melitensis biotype 2 (strain ATCC 23457).